Reading from the N-terminus, the 490-residue chain is Probable cytosol aminopeptidase (490 aa).

Mn(2+) contacts are provided by lysine 256 and aspartate 261. Lysine 268 is a catalytic residue. Residues aspartate 280, aspartate 340, and glutamate 342 each coordinate Mn(2+). Arginine 344 is a catalytic residue.

The protein belongs to the peptidase M17 family. Requires Mn(2+) as cofactor.

The protein localises to the cytoplasm. The enzyme catalyses Release of an N-terminal amino acid, Xaa-|-Yaa-, in which Xaa is preferably Leu, but may be other amino acids including Pro although not Arg or Lys, and Yaa may be Pro. Amino acid amides and methyl esters are also readily hydrolyzed, but rates on arylamides are exceedingly low.. It carries out the reaction Release of an N-terminal amino acid, preferentially leucine, but not glutamic or aspartic acids.. Presumably involved in the processing and regular turnover of intracellular proteins. Catalyzes the removal of unsubstituted N-terminal amino acids from various peptides. The protein is Probable cytosol aminopeptidase of Prochlorococcus marinus (strain MIT 9313).